Here is a 466-residue protein sequence, read N- to C-terminus: UDP-N-acetylmuramoylalanine--D-glutamate ligase (466 aa).

122 to 128 (GTNGKTT) is a binding site for ATP.

The protein belongs to the MurCDEF family.

It localises to the cytoplasm. The catalysed reaction is UDP-N-acetyl-alpha-D-muramoyl-L-alanine + D-glutamate + ATP = UDP-N-acetyl-alpha-D-muramoyl-L-alanyl-D-glutamate + ADP + phosphate + H(+). It functions in the pathway cell wall biogenesis; peptidoglycan biosynthesis. Cell wall formation. Catalyzes the addition of glutamate to the nucleotide precursor UDP-N-acetylmuramoyl-L-alanine (UMA). The polypeptide is UDP-N-acetylmuramoylalanine--D-glutamate ligase (Aromatoleum aromaticum (strain DSM 19018 / LMG 30748 / EbN1) (Azoarcus sp. (strain EbN1))).